Reading from the N-terminus, the 411-residue chain is Flagellum-associated coiled-coil domain-containing protein 1 (411 aa).

Residues 52–77 form a disordered region; that stretch reads SQPAKSTAFPRDKAQSRKLEESNKAP. Positions 61–74 are enriched in basic and acidic residues; sequence PRDKAQSRKLEESN. 2 coiled-coil regions span residues 124–220 and 278–328; these read SDII…LKNM and NESF…VVLE. N6-acetyllysine is present on K353. Residues 355–385 are a coiled coil; it reads FQTKLAEAEEKYKSTIQVLTEENNSLRQKVL.

It localises to the cytoplasm. Its subcellular location is the cytoplasmic granule. The protein resides in the cell projection. The protein localises to the cilium. It is found in the flagellum. This is Flagellum-associated coiled-coil domain-containing protein 1 from Rattus norvegicus (Rat).